The primary structure comprises 320 residues: Citrate synthase (320 aa).

Active-site residues include His-249 and Asp-307.

This sequence belongs to the citrate synthase family.

The catalysed reaction is oxaloacetate + acetyl-CoA + H2O = citrate + CoA + H(+). It functions in the pathway carbohydrate metabolism; tricarboxylic acid cycle; isocitrate from oxaloacetate: step 1/2. The sequence is that of Citrate synthase (gltA) from Bartonella doshiae.